The primary structure comprises 227 residues: Flagellar transcriptional regulator FtcR (227 aa).

Residues 1 to 116 (MIVVVDDRDM…EILARINAIR (116 aa)) form the Response regulatory domain. The segment at residues 127-226 (ADGTQLGPIR…KRFLGYCINI (100 aa)) is a DNA-binding region (ompR/PhoB-type).

Functionally, required for transcription of flagellar genes. The polypeptide is Flagellar transcriptional regulator FtcR (ftcR) (Brucella abortus (strain 2308)).